The following is a 100-amino-acid chain: UPF0235 protein TC_0667 (100 aa).

Belongs to the UPF0235 family.

This Chlamydia muridarum (strain MoPn / Nigg) protein is UPF0235 protein TC_0667.